Reading from the N-terminus, the 190-residue chain is Protein GrpE (190 aa).

Belongs to the GrpE family. As to quaternary structure, homodimer.

The protein localises to the cytoplasm. Participates actively in the response to hyperosmotic and heat shock by preventing the aggregation of stress-denatured proteins, in association with DnaK and GrpE. It is the nucleotide exchange factor for DnaK and may function as a thermosensor. Unfolded proteins bind initially to DnaJ; upon interaction with the DnaJ-bound protein, DnaK hydrolyzes its bound ATP, resulting in the formation of a stable complex. GrpE releases ADP from DnaK; ATP binding to DnaK triggers the release of the substrate protein, thus completing the reaction cycle. Several rounds of ATP-dependent interactions between DnaJ, DnaK and GrpE are required for fully efficient folding. The chain is Protein GrpE from Streptococcus agalactiae serotype III (strain NEM316).